The following is a 482-amino-acid chain: Aspartyl/glutamyl-tRNA(Asn/Gln) amidotransferase subunit B (482 aa).

Belongs to the GatB/GatE family. GatB subfamily. Heterotrimer of A, B and C subunits.

It carries out the reaction L-glutamyl-tRNA(Gln) + L-glutamine + ATP + H2O = L-glutaminyl-tRNA(Gln) + L-glutamate + ADP + phosphate + H(+). The catalysed reaction is L-aspartyl-tRNA(Asn) + L-glutamine + ATP + H2O = L-asparaginyl-tRNA(Asn) + L-glutamate + ADP + phosphate + 2 H(+). Its function is as follows. Allows the formation of correctly charged Asn-tRNA(Asn) or Gln-tRNA(Gln) through the transamidation of misacylated Asp-tRNA(Asn) or Glu-tRNA(Gln) in organisms which lack either or both of asparaginyl-tRNA or glutaminyl-tRNA synthetases. The reaction takes place in the presence of glutamine and ATP through an activated phospho-Asp-tRNA(Asn) or phospho-Glu-tRNA(Gln). This chain is Aspartyl/glutamyl-tRNA(Asn/Gln) amidotransferase subunit B, found in Thermotoga sp. (strain RQ2).